We begin with the raw amino-acid sequence, 147 residues long: Large ribosomal subunit protein uL13 (147 aa).

It belongs to the universal ribosomal protein uL13 family. In terms of assembly, part of the 50S ribosomal subunit.

This protein is one of the early assembly proteins of the 50S ribosomal subunit, although it is not seen to bind rRNA by itself. It is important during the early stages of 50S assembly. The protein is Large ribosomal subunit protein uL13 of Beutenbergia cavernae (strain ATCC BAA-8 / DSM 12333 / CCUG 43141 / JCM 11478 / NBRC 16432 / NCIMB 13614 / HKI 0122).